Here is a 416-residue protein sequence, read N- to C-terminus: L-threonine dehydratase biosynthetic IlvA (416 aa).

The residue at position 51 (Lys51) is an N6-(pyridoxal phosphate)lysine. Residues Asn78, 184–188 (GGGGL), and Ser309 each bind pyridoxal 5'-phosphate. One can recognise an ACT-like domain in the interval 333-407 (HYFVINFPQR…FDNRYVNLHG (75 aa)).

Belongs to the serine/threonine dehydratase family. As to quaternary structure, homotetramer. Pyridoxal 5'-phosphate serves as cofactor.

It catalyses the reaction L-threonine = 2-oxobutanoate + NH4(+). The protein operates within amino-acid biosynthesis; L-isoleucine biosynthesis; 2-oxobutanoate from L-threonine: step 1/1. Functionally, catalyzes the anaerobic formation of alpha-ketobutyrate and ammonia from threonine in a two-step reaction. The first step involved a dehydration of threonine and a production of enamine intermediates (aminocrotonate), which tautomerizes to its imine form (iminobutyrate). Both intermediates are unstable and short-lived. The second step is the nonenzymatic hydrolysis of the enamine/imine intermediates to form 2-ketobutyrate and free ammonia. In the low water environment of the cell, the second step is accelerated by RidA. This Lactococcus lactis subsp. lactis (strain IL1403) (Streptococcus lactis) protein is L-threonine dehydratase biosynthetic IlvA (ilvA).